Here is a 796-residue protein sequence, read N- to C-terminus: RNA cytosine-C(5)-methyltransferase NSUN2 (796 aa).

Residues 1-11 show a composition bias toward basic residues; sequence MGRRARDRRRQ. A disordered region spans residues 1 to 36; that stretch reads MGRRARDRRRQLQPQQRRERSGGGGGGGDDQAGWAG. The span at 22-36 shows a compositional bias: gly residues; sequence GGGGGGGDDQAGWAG. Residues 184–190, D215, D242, and D268 contribute to the S-adenosyl-L-methionine site; that span reads CAAPGSK. C321 functions as the Nucleophile in the catalytic mechanism. 2 disordered regions span residues 435–501 and 707–796; these read WNKR…CGPP and RKEG…NVKD. 3 stretches are compositionally biased toward basic and acidic residues: residues 467–483, 708–721, and 733–746; these read ATEK…KKVQ, KEGE…EEVQ, and VEDK…KMEA. The segment covering 774-783 has biased composition (polar residues); the sequence is CSKNTNSHIN. A compositionally biased stretch (basic and acidic residues) spans 784-796; that stretch reads QESKDMNTNNVKD.

It belongs to the class I-like SAM-binding methyltransferase superfamily. RsmB/NOP family. TRM4 subfamily.

The protein resides in the nucleus. It localises to the nucleolus. Its subcellular location is the cytoplasm. It is found in the mitochondrion. The protein localises to the cytoskeleton. The protein resides in the spindle. It localises to the secreted. Its subcellular location is the extracellular exosome. It catalyses the reaction cytidine(48) in tRNA + S-adenosyl-L-methionine = 5-methylcytidine(48) in tRNA + S-adenosyl-L-homocysteine + H(+). It carries out the reaction cytidine(49) in tRNA + S-adenosyl-L-methionine = 5-methylcytidine(49) in tRNA + S-adenosyl-L-homocysteine + H(+). The enzyme catalyses cytidine(50) in tRNA + S-adenosyl-L-methionine = 5-methylcytidine(50) in tRNA + S-adenosyl-L-homocysteine + H(+). The catalysed reaction is cytidine(34) in tRNA precursor + S-adenosyl-L-methionine = 5-methylcytidine(34) in tRNA precursor + S-adenosyl-L-homocysteine + H(+). It catalyses the reaction a cytidine in mRNA + S-adenosyl-L-methionine = a 5-methylcytidine in mRNA + S-adenosyl-L-homocysteine + H(+). In terms of biological role, RNA cytosine C(5)-methyltransferase that methylates cytosine to 5-methylcytosine (m5C) in various RNAs, such as tRNAs, mRNAs and some long non-coding RNAs (lncRNAs). Involved in various processes, such as epidermal stem cell differentiation, testis differentiation and maternal to zygotic transition during early development: acts by increasing protein synthesis; cytosine C(5)-methylation promoting tRNA stability and preventing mRNA decay. Methylates cytosine to 5-methylcytosine (m5C) at positions 34 and 48 of intron-containing tRNA(Leu)(CAA) precursors, and at positions 48, 49 and 50 of tRNA(Gly)(GCC) precursors. tRNA methylation is required generation of RNA fragments derived from tRNAs (tRFs). Also mediates C(5)-methylation of mitochondrial tRNAs. Catalyzes cytosine C(5)-methylation of mRNAs, leading to stabilize them and prevent mRNA decay. Cytosine C(5)-methylation of mRNAs also regulates mRNA export. Also mediates cytosine C(5)-methylation of non-coding RNAs, such as vault RNAs (vtRNAs), promoting their processing into regulatory small RNAs. Required for proper spindle assembly and chromosome segregation, independently of its methyltransferase activity. The protein is RNA cytosine-C(5)-methyltransferase NSUN2 of Gallus gallus (Chicken).